The primary structure comprises 93 residues: SH3 domain-binding glutamic acid-rich-like protein 3 (93 aa).

Position 2 is an N-acetylserine (Ser-2). Residue Ser-2 is glycosylated (O-linked (GalNAc...) serine). In terms of domain architecture, Glutaredoxin spans Ser-2 to Ala-93. Thr-9 and Thr-12 each carry an O-linked (GalNAc...) threonine glycan.

Belongs to the SH3BGR family. In terms of assembly, homodimer. Interacts with MYO1C (via its IQ motifs); the interaction is dependent on calcium and takes place at membrane ruffles. May be glycosylated.

It is found in the cytoplasm. Its subcellular location is the cytosol. It localises to the cell projection. The protein localises to the ruffle membrane. The protein resides in the nucleus. Could act as a modulator of glutaredoxin biological activity. May play a role in cytoskeleton organization. The polypeptide is SH3 domain-binding glutamic acid-rich-like protein 3 (SH3BGRL3) (Pongo abelii (Sumatran orangutan)).